A 558-amino-acid chain; its full sequence is SPATS2-like protein (558 aa).

Residue Ala2 is modified to N-acetylalanine. Residues 63 to 79 (GKKKNNKRKRSKSKQHQ) show a composition bias toward basic residues. 2 disordered regions span residues 63-134 (GKKK…EKKI) and 157-201 (KLSL…KSNT). Residues 80–92 (GNKDAKDKVERPE) are compositionally biased toward basic and acidic residues. A Phosphoserine modification is found at Ser120. Residues 271-344 (LMAEMDKVKE…ARFSCDIEQL (74 aa)) are a coiled coil. Residues 380 to 525 (TSGKQSNFSR…DTSEARPFRG (146 aa)) form a disordered region. 3 stretches are compositionally biased toward polar residues: residues 381 to 390 (SGKQSNFSRK), 410 to 432 (SLPS…GSSN), and 440 to 456 (QYHN…QGSG). A Phosphoserine modification is found at Ser455. Residues 469-485 (HEHRRQPHNGFRPKNKG) show a composition bias toward basic residues. Over residues 513 to 522 (HAADTSEARP) the composition is skewed to basic and acidic residues.

Belongs to the SPATS2 family.

It is found in the cytoplasm. It localises to the nucleus. Its subcellular location is the nucleolus. The sequence is that of SPATS2-like protein (SPATS2L) from Homo sapiens (Human).